The sequence spans 162 residues: Caveolin-2 (162 aa).

Residues 1–86 (MGLETEKADA…FEVSKYLIYK (86 aa)) lie on the Cytoplasmic side of the membrane. The residue at position 19 (Tyr-19) is a Phosphotyrosine; by SRC. Positions 19-40 (YSRHSGLGYPEPEKCAKSTQDR) are disordered. Phosphoserine is present on residues Ser-20 and Ser-23. Tyr-27 is modified (phosphotyrosine; by SRC). The segment covering 29-40 (EPEKCAKSTQDR) has biased composition (basic and acidic residues). Position 36 is a phosphoserine (Ser-36). An intramembrane region (helical) is located at residues 87–107 (VLTVLLAIPLAFVAGILFATL). Residues 108 to 162 (SCLHIWIVVPFVKTCLMVLPSVQTVWHSITDGFIAPLYKSMGLIFSSISLRLSPE) lie on the Cytoplasmic side of the membrane.

It belongs to the caveolin family. In terms of assembly, monomer or homodimer. Interacts with CAV1; the interaction forms a stable heterooligomeric complex that is required for targeting to lipid rafts and for caveolae formation. Tyrosine phosphorylated forms do not form heterooligomers with the Tyr-19-phosphorylated form existing as a monomer or dimer, and the Tyr-27-form as a monomer only. Interacts (tyrosine phosphorylated form) with the SH2 domain-containing proteins, RASA1, NCK1 and SRC. Interacts (tyrosine phosphorylated form) with INSR, the interaction (Tyr-27-phosphorylated form) is increased on insulin stimulation. Interacts (Tyr-19 phosphorylated form) with MAPK1 (phosphorylated form); the interaction, promoted by insulin, leads to nuclear location and MAPK1 activation. Interacts with STAT3; the interaction is increased on insulin-induced tyrosine phosphorylation leading to STAT activation. Post-translationally, phosphorylated on serine and tyrosine residues. CAV1 promotes phosphorylation on Ser-23 which then targets the complex to the plasma membrane, lipid rafts and caveolae. Phosphorylation on Ser-36 appears to modulate mitosis in endothelial cells. Phosphorylation on both Tyr-19 and Tyr-27 is required for insulin-induced 'Ser-727' phosphorylation of STAT3 and its activation. Phosphorylation on Tyr-19 is required for insulin-induced phosphorylation of MAPK1 and DNA binding of STAT3. Tyrosine phosphorylation is induced by both EGF and insulin (By. similarity).

The protein resides in the nucleus. It is found in the cytoplasm. The protein localises to the golgi apparatus membrane. It localises to the cell membrane. Its subcellular location is the membrane. The protein resides in the caveola. Functionally, may act as a scaffolding protein within caveolar membranes. Interacts directly with G-protein alpha subunits and can functionally regulate their activity. Acts as an accessory protein in conjunction with CAV1 in targeting to lipid rafts and driving caveolae formation. The Ser-36 phosphorylated form has a role in modulating mitosis in endothelial cells. Positive regulator of cellular mitogenesis of the MAPK signaling pathway. Required for the insulin-stimulated nuclear translocation and activation of MAPK1 and STAT3, and the subsequent regulation of cell cycle progression. The protein is Caveolin-2 (CAV2) of Didelphis virginiana (North American opossum).